The sequence spans 384 residues: Brix domain-containing protein F44G4.1 (384 aa).

Disordered stretches follow at residues methionine 1–lysine 58 and serine 82–glutamate 135. Acidic residues predominate over residues phenylalanine 18–glutamate 48. Residues leucine 96–arginine 114 show a composition bias toward basic residues. Positions alanine 115–leucine 127 are enriched in basic and acidic residues. Residues proline 177–aspartate 360 enclose the Brix domain.

This chain is Brix domain-containing protein F44G4.1, found in Caenorhabditis elegans.